Consider the following 65-residue polypeptide: Alpha-like toxin Bom4 (65 aa).

An LCN-type CS-alpha/beta domain is found at 2–64 (RDAYIAQPEN…VPIRIPGKCH (63 aa)). 4 disulfide bridges follow: cysteine 12/cysteine 63, cysteine 16/cysteine 36, cysteine 22/cysteine 46, and cysteine 26/cysteine 48.

This sequence belongs to the long (4 C-C) scorpion toxin superfamily. Sodium channel inhibitor family. Alpha subfamily. In terms of tissue distribution, expressed by the venom gland.

It localises to the secreted. Its function is as follows. Alpha toxins bind voltage-independently at site-3 of sodium channels (Nav) and inhibit the inactivation of the activated channels, thereby blocking neuronal transmission. This alpha-like toxin is highly toxic to mice and insects. The polypeptide is Alpha-like toxin Bom4 (Buthus occitanus mardochei (Moroccan scorpion)).